Reading from the N-terminus, the 164-residue chain is Neurotrophin-3 (164 aa).

The N-terminal stretch at 1-3 (IQS) is a signal peptide. A propeptide spanning residues 4–118 (TSMDQGBLSE…GLNRTSRRKR (115 aa)) is cleaved from the precursor. The tract at residues 89–126 (LLSENTPLEPPPLYLTEEPMGLNRTSRRKRFAEGKSHR) is disordered. A glycan (N-linked (GlcNAc...) asparagine) is linked at N111.

This sequence belongs to the NGF-beta family.

The protein localises to the secreted. Functionally, seems to promote the survival of visceral and proprioceptive sensory neurons. The chain is Neurotrophin-3 (NTF3) from Cylindrophis ruffus (Red-tailed pipe snake).